We begin with the raw amino-acid sequence, 221 residues long: 7-cyano-7-deazaguanine synthase (221 aa).

Y9–L19 is an ATP binding site. C186, C194, C197, and C200 together coordinate Zn(2+).

It belongs to the QueC family. It depends on Zn(2+) as a cofactor.

It carries out the reaction 7-carboxy-7-deazaguanine + NH4(+) + ATP = 7-cyano-7-deazaguanine + ADP + phosphate + H2O + H(+). It functions in the pathway purine metabolism; 7-cyano-7-deazaguanine biosynthesis. Its function is as follows. Catalyzes the ATP-dependent conversion of 7-carboxy-7-deazaguanine (CDG) to 7-cyano-7-deazaguanine (preQ(0)). The protein is 7-cyano-7-deazaguanine synthase of Psychromonas ingrahamii (strain DSM 17664 / CCUG 51855 / 37).